We begin with the raw amino-acid sequence, 660 residues long: Solute carrier family 5 member 4B (660 aa).

Residues 1-27 are Cytoplasmic-facing; that stretch reads MASTLSPSITPQTEEPPVVPVRIQNAA. A helical membrane pass occupies residues 28–48; the sequence is DISVIVIYFIVVLAVGLWSMV. Residues 49 to 54 are Extracellular-facing; the sequence is RSNRGT. Residues 55-75 form a helical membrane-spanning segment; that stretch reads VGGFFLAGHDMAWWPMGASLF. At 76–82 the chain is on the cytoplasmic side; it reads ASNIGSN. Residues 83–103 traverse the membrane as a helical segment; the sequence is HFVGLAGTGAASGIAIAAVEW. The Extracellular portion of the chain corresponds to 104-105; sequence NA. A helical membrane pass occupies residues 106–126; sequence LLMVLVLGWVFLPIYIKAGVL. The Cytoplasmic segment spans residues 127–142; sequence TMPEYLRKRFGGKRLQ. A helical membrane pass occupies residues 143–163; the sequence is IYLSVLSLFIMVALQTSSIIF. The Extracellular portion of the chain corresponds to 164–166; sequence SGA. The chain crosses the membrane as a helical span at residues 167–187; sequence IFIQLALGLNLYLAVFILLAI. Residues 188-208 are Cytoplasmic-facing; sequence TAFYTVAGGLASVIYTDSVQT. A helical transmembrane segment spans residues 209–229; sequence FIMLLGSLILMGFAFAEVGGY. Residues 230-277 lie on the Extracellular side of the membrane; that stretch reads ESFTEKYMNAIPSVVEGDNLTISPKCYTPQPDSFHVFRDPVTGDIPWP. A helical transmembrane segment spans residues 278–298; the sequence is GLIFGMTILAIWYWCADQVIV. Residues 299 to 313 are Cytoplasmic-facing; sequence QRCLCGKNMSHVKAA. The chain crosses the membrane as a helical span at residues 314 to 334; the sequence is CILCGYLKLLPMFLMVMPGMI. The Extracellular portion of the chain corresponds to 335–380; the sequence is SRILYTDKVACVVPSECEKQCGTAVGCTNYAYPTLVLELMPDGLRG. Residues 381–401 form a helical membrane-spanning segment; sequence LMLSVMLASLMSSLTSIFNSA. At 402–423 the chain is on the cytoplasmic side; it reads STLFTIDLYTKIRKKASERELM. The chain crosses the membrane as a helical span at residues 424–444; the sequence is IAGRIFGMVLIAVSILWVPLV. The Extracellular portion of the chain corresponds to 445–455; sequence QVSQNGQLFHY. The chain crosses the membrane as a helical span at residues 456–476; the sequence is IGSVSSYLGPPLGAVFMLAIF. The Cytoplasmic portion of the chain corresponds to 477-484; that stretch reads FKRVNEQG. The helical transmembrane segment at 485 to 505 threads the bilayer; that stretch reads AFWGLMVGLVVGLIRLIAEFV. Over 506–526 the chain is Extracellular; that stretch reads YGTGSCVAPSNCPKIICGVHY. A helical membrane pass occupies residues 527–547; that stretch reads MYFAIILFFVSIIVILGVSFL. Topologically, residues 548–639 are cytoplasmic; it reads TEPIPDVHLY…DTSEKPLWRT (92 aa). Residues 640-660 form a helical membrane-spanning segment; that stretch reads VMNINAVLLLGVAVFVHAYFA.

The protein belongs to the sodium:solute symporter (SSF) (TC 2.A.21) family. Expressed in small intestine. Expressed in kidney.

The protein resides in the cell membrane. It catalyses the reaction D-glucose(out) + 2 Na(+)(out) = D-glucose(in) + 2 Na(+)(in). Inhibited by phlorizin. Its function is as follows. Low-affinity sodium/D-glucose symporter. Generates D-glucose-induced depolarization in a pH-independent manner. The chain is Solute carrier family 5 member 4B from Mus musculus (Mouse).